A 291-amino-acid chain; its full sequence is MLQGSLVALITPMNQDGSIHYEQLRDLIDWHIENGTDGIVAVGTTGESATLSVEEHTAVIEAVVKHVAKRVPVIAGTGANNTVEAIALSQAAEKAGADYTLSVVPYYNKPSQEGMYRHFKAVAEAAAIPMILYNVPGRTVVSMNNETILRLAEIPNIVGVKEASGNIGSNIELINRAPEGFFVLSGDDHTALPFMLCGGHGVITVAANAAPKLFADMCRAALQGDIALARELNDRLIPIYDTMFCEPSPAAPKWAVSALGRCEPHVRLPLVPLTEGGQAKVRAALKASGQL.

Residue Thr45 coordinates pyruvate. The active-site Proton donor/acceptor is Tyr133. Residue Lys161 is the Schiff-base intermediate with substrate of the active site. Ile203 is a pyruvate binding site.

It belongs to the DapA family. As to quaternary structure, homotetramer; dimer of dimers.

Its subcellular location is the cytoplasm. The catalysed reaction is L-aspartate 4-semialdehyde + pyruvate = (2S,4S)-4-hydroxy-2,3,4,5-tetrahydrodipicolinate + H2O + H(+). It participates in amino-acid biosynthesis; L-lysine biosynthesis via DAP pathway; (S)-tetrahydrodipicolinate from L-aspartate: step 3/4. Its function is as follows. Catalyzes the condensation of (S)-aspartate-beta-semialdehyde [(S)-ASA] and pyruvate to 4-hydroxy-tetrahydrodipicolinate (HTPA). This Neisseria meningitidis serogroup C (strain 053442) protein is 4-hydroxy-tetrahydrodipicolinate synthase.